A 173-amino-acid polypeptide reads, in one-letter code: ATP synthase subunit b (173 aa).

The helical transmembrane segment at 15 to 35 (GVEWGTVIVQVLTFIVLLALL) threads the bilayer.

The protein belongs to the ATPase B chain family. F-type ATPases have 2 components, F(1) - the catalytic core - and F(0) - the membrane proton channel. F(1) has five subunits: alpha(3), beta(3), gamma(1), delta(1), epsilon(1). F(0) has three main subunits: a(1), b(2) and c(10-14). The alpha and beta chains form an alternating ring which encloses part of the gamma chain. F(1) is attached to F(0) by a central stalk formed by the gamma and epsilon chains, while a peripheral stalk is formed by the delta and b chains.

It is found in the cell membrane. Functionally, f(1)F(0) ATP synthase produces ATP from ADP in the presence of a proton or sodium gradient. F-type ATPases consist of two structural domains, F(1) containing the extramembraneous catalytic core and F(0) containing the membrane proton channel, linked together by a central stalk and a peripheral stalk. During catalysis, ATP synthesis in the catalytic domain of F(1) is coupled via a rotary mechanism of the central stalk subunits to proton translocation. Component of the F(0) channel, it forms part of the peripheral stalk, linking F(1) to F(0). This chain is ATP synthase subunit b, found in Staphylococcus aureus (strain MSSA476).